The following is a 517-amino-acid chain: Pseudaminic acid cytidylyltransferase and UDP-2,4-diacetamido-2,4,6-trideoxy-beta-L-altropyranose hydrolase (517 aa).

The interval 1-208 (MRAIAIVLAR…ELSPLEVQDI (208 aa)) is pseudaminic acid cytidylyltransferase. The tract at residues 209–517 (AHFRRFRISQ…EGALREFLEI (309 aa)) is UDP-2,4-diacetamido-2,4,6-trideoxy-beta-L-altropyranose hydrolase. His-244 (proton acceptor; for UDP-2,4-diacetamido-2,4,6-trideoxy-beta-L-altropyranose hydrolase activity) is an active-site residue.

This sequence in the N-terminal section; belongs to the CMP-NeuNAc synthase family. In the C-terminal section; belongs to the PseG family. In terms of assembly, monomer. The cofactor is Mg(2+).

The enzyme catalyses UDP-2,4-diacetamido-2,4,6-trideoxy-beta-L-altrose + H2O = 2,4-diacetamido-2,4,6-trideoxy-beta-L-altrose + UDP + H(+). It catalyses the reaction pseudaminate + CTP = CMP-pseudaminate + diphosphate. In terms of biological role, catalyzes the fourth and sixth steps in the biosynthesis of pseudaminic acid, a sialic-acid-like sugar that is used to modify flagellin. The C-terminus mediates the fourth step of the pathway and catalyzes the removal of UDP from C-1 of UDP-2,4-diacetamido-2,4,6-trideoxy-beta-L-altropyranose forming 2,4-diacetamido-2,4,6-trideoxy-beta-L-altropyranose. The N-terminal part mediates the last step of the pathway by mediating activation of pseudaminic acid with CMP by forming CMP-pseudaminic acid. The sequence is that of Pseudaminic acid cytidylyltransferase and UDP-2,4-diacetamido-2,4,6-trideoxy-beta-L-altropyranose hydrolase from Helicobacter pylori (strain ATCC 700392 / 26695) (Campylobacter pylori).